A 304-amino-acid polypeptide reads, in one-letter code: Protease HtpX homolog 1 (304 aa).

2 helical membrane passes run 17–37 (VTLF…IALL) and 39–59 (SWVL…WFSD). His-140 is a Zn(2+) binding site. Glu-141 is a catalytic residue. Residue His-144 participates in Zn(2+) binding. Transmembrane regions (helical) follow at residues 151-171 (AVIT…RFAF) and 186-206 (AVLA…FLLI). Glu-214 lines the Zn(2+) pocket.

It belongs to the peptidase M48B family. The cofactor is Zn(2+).

The protein localises to the cell membrane. This is Protease HtpX homolog 1 from Streptomyces coelicolor (strain ATCC BAA-471 / A3(2) / M145).